A 734-amino-acid chain; its full sequence is MAAIELHKPEINADDDDDESPVEQVRLTVSNHDDPSLPVWTFRMWFLGLLSCILLSFLNTFFGYRTQPLMITMISVQVVTLPLGKLMARVLPETKYKIGSWEFSFNPGPFNVKEHVLISMFANAGAGFGSGTAYAVGIVDIIMAFYKRKISFLASWILVITTQILGYGWAGIMRKLVVDPAQMWWPTSVLQVSLFRALHEKDNARMSRGKFFVIAFVCSFAWYIFPAYLFLTLSSISWVCWAFPKSITAQQLGSGMSGLGIGAFALDWSVIASYLGSPLVTPFFAIVNVLVGYVLVMYMVIPISYWGMNVYEANKFPIFSSDLFDKQGQLYNISTIVNNKFELDMENYQQQGRVYLSTFFAISYGIGFAAIVSTLTHVALFNGKGIWQQVRASTKAKMDIHTRLMKKYKDIPGWWFYSLLAISLVLSLVLCIFMKDEIQMPWWGLLLASFMALTFTVPVSIITATTNQTPGLNIITEYLMGVLLPGRPIANVCFKTYGYISMSQAISFLNDFKLGHYMKIPPRSMFLVQFIGTVIAGTVNISVAWYLLTSVENICQKELLPPNSPWTCPSDRVFFDASVIWGLVGPKRIFGRLGNYPALNWFFLGGLIGPVLVWLLQKAFPTKTWISQINLPVLLGATAAMPPATSVNFNCWIIVGVIFNYFVFKYCKKWWQRYNYVLSAALDAGLAFMGVLLYFSLTMNGISINHWWGAKGENCPLASCPTAPGVLVDGCPVF.

The next 14 helical transmembrane spans lie at 44-64 (MWFL…FFGY), 68-88 (PLMI…KLMA), 125-145 (GAGF…IMAF), 152-172 (FLAS…WAGI), 211-231 (FFVI…YLFL), 252-272 (LGSG…SVIA), 283-303 (FFAI…VIPI), 359-379 (FFAI…THVA), 414-434 (WWFY…CIFM), 442-462 (WWGL…VSII), 525-545 (MFLV…SVAW), 596-616 (YPAL…VWLL), 644-664 (ATSV…YFVF), and 677-697 (VLSA…YFSL).

This sequence belongs to the oligopeptide OPT transporter (TC 2.A.67.1) family. Expressed in flowers, leaves, roots, and stems.

Its subcellular location is the membrane. Involved in the translocation of tetra- and pentapeptides across the cellular membrane in an energy-dependent manner. In Arabidopsis thaliana (Mouse-ear cress), this protein is Oligopeptide transporter 2 (OPT2).